The primary structure comprises 99 residues: DNA-directed RNA polymerase subunit omega (99 aa).

A disordered region spans residues Glu-55–Asn-99. Basic and acidic residues predominate over residues Pro-65–Asn-99.

It belongs to the RNA polymerase subunit omega family. The RNAP catalytic core consists of 2 alpha, 1 beta, 1 beta' and 1 omega subunit. When a sigma factor is associated with the core the holoenzyme is formed, which can initiate transcription.

The enzyme catalyses RNA(n) + a ribonucleoside 5'-triphosphate = RNA(n+1) + diphosphate. In terms of biological role, promotes RNA polymerase assembly. Latches the N- and C-terminal regions of the beta' subunit thereby facilitating its interaction with the beta and alpha subunits. The chain is DNA-directed RNA polymerase subunit omega from Enterococcus faecalis (strain ATCC 700802 / V583).